Here is a 517-residue protein sequence, read N- to C-terminus: Glycerol kinase (517 aa).

An ADP-binding site is contributed by threonine 24. Residues threonine 24, threonine 25, and serine 26 each contribute to the ATP site. Residue threonine 24 coordinates sn-glycerol 3-phosphate. Arginine 28 is a binding site for ADP. Sn-glycerol 3-phosphate-binding residues include arginine 94, glutamate 95, tyrosine 146, and aspartate 261. The glycerol site is built by arginine 94, glutamate 95, tyrosine 146, aspartate 261, and glutamine 262. Positions 283 and 327 each coordinate ADP. ATP is bound by residues threonine 283, glycine 327, glutamine 331, and glycine 428. Residues glycine 428 and asparagine 432 each coordinate ADP.

This sequence belongs to the FGGY kinase family.

The catalysed reaction is glycerol + ATP = sn-glycerol 3-phosphate + ADP + H(+). It participates in polyol metabolism; glycerol degradation via glycerol kinase pathway; sn-glycerol 3-phosphate from glycerol: step 1/1. Its activity is regulated as follows. Inhibited by fructose 1,6-bisphosphate (FBP). Its function is as follows. Key enzyme in the regulation of glycerol uptake and metabolism. Catalyzes the phosphorylation of glycerol to yield sn-glycerol 3-phosphate. The polypeptide is Glycerol kinase (Mycobacterium tuberculosis (strain ATCC 25177 / H37Ra)).